Here is an 87-residue protein sequence, read N- to C-terminus: Small ribosomal subunit protein bS20 (87 aa).

The interval 1-20 is disordered; it reads MANHKSAEKRARQTIKRTER.

The protein belongs to the bacterial ribosomal protein bS20 family.

Functionally, binds directly to 16S ribosomal RNA. The sequence is that of Small ribosomal subunit protein bS20 from Campylobacter lari (strain RM2100 / D67 / ATCC BAA-1060).